The primary structure comprises 280 residues: Shikimate kinase (280 aa).

86–96 (PPGVGLKGSAA) lines the ATP pocket.

This sequence belongs to the GHMP kinase family. Archaeal shikimate kinase subfamily.

It localises to the cytoplasm. The enzyme catalyses shikimate + ATP = 3-phosphoshikimate + ADP + H(+). It participates in metabolic intermediate biosynthesis; chorismate biosynthesis; chorismate from D-erythrose 4-phosphate and phosphoenolpyruvate: step 5/7. The polypeptide is Shikimate kinase (aroK) (Aeropyrum pernix (strain ATCC 700893 / DSM 11879 / JCM 9820 / NBRC 100138 / K1)).